Consider the following 271-residue polypeptide: MSILPGCKDPSLSALKSKGYNVVQLPRADLRPTQLLVEKSKRLQRLGELLSVFDAAADGPPAPPVSADRPGPNIAGTQSADLDVDLGLSVLRGIISALGGSTLGVDAAFARAATVQFEFSSTLENNSELALIDRFLAASRVNPHARAVAEMLEQDQVYVVTSTLKAQRINVAAKDSNKQSLGLNLPVIQDAIGANVKIAAAAASGSTVSFEGAVPLVFGFQAVRLIFEQGRYRTMRLVDAGGVVAEAVRPDGAADGEPPCYLDVEAMLLDR.

Residue C7 is the site of S-palmitoyl cysteine attachment. A run of 4 beta stranded transmembrane segments spans residues 74-90 (IAGT…GLSV), 102-120 (TLGV…FEFS), 168-185 (RINV…GLNL), and 194-210 (ANVK…TVSF).

It belongs to the bacterial gasdermin family. As to quaternary structure, monomer. In terms of assembly, forms large, homooligomeric ring-shaped pores when inserted in membranes. Palmitoylation helps stabilize the inactive state; may self palmitoylate. Palmitoylation plays a significant role in pore formation.

Its subcellular location is the cytoplasm. It localises to the cell inner membrane. With respect to regulation, the full-length protein before cleavage is inactive: intramolecular interactions between the N-terminal domain and the C-terminal region as well as the lipid modification, mediate autoinhibition. The pyroptosis-like-inducing activity is carried by the released N-terminal domain (Gasdermin bGSDM, N-terminus). Its function is as follows. Involved in defense against bacteriophages. When this probable 4 gene operon (bGSDM-FE772_23060-FE772_23065-FE772_23070) is inserted into E.coli it provides nearly 100-fold protection against phages T5 and T6 and about 8-fold against phage T4. The operon without bGSDM no longer protects against phage. Cleavage of this precursor by its dedicated protease(s) releases the active moiety (gasdermin bGSDM, N-terminus) which inserts into membranes, forming pores and triggering cell death. In terms of biological role, pore-forming protein that causes membrane permeabilization via a pyroptosis-like activity. Makes ring-like pores when released. This chain is Gasdermin bGSDM, found in Lysobacter enzymogenes.